Reading from the N-terminus, the 117-residue chain is uncharacterized protein (117 aa).

The interval F16 to L56 is disordered. Low complexity predominate over residues S31–L56.

This is an uncharacterized protein from Saccharomyces cerevisiae (strain ATCC 204508 / S288c) (Baker's yeast).